Reading from the N-terminus, the 398-residue chain is Chalcone synthase 1 (398 aa).

58–65 (KFKRMCDK) is a binding site for CoA. The Acyl-thioester intermediate role is filled by cysteine 167. Substrate-binding positions include threonine 200 and 219 to 220 (GD). Alanine 311 is a binding site for CoA.

Belongs to the thiolase-like superfamily. Chalcone/stilbene synthases family. In terms of assembly, homodimer.

The catalysed reaction is (E)-4-coumaroyl-CoA + 3 malonyl-CoA + 3 H(+) = 2',4,4',6'-tetrahydroxychalcone + 3 CO2 + 4 CoA. It functions in the pathway secondary metabolite biosynthesis; flavonoid biosynthesis. The primary product of this enzyme is 4,2',4',6'-tetrahydroxychalcone (also termed naringenin-chalcone or chalcone) which can under specific conditions spontaneously isomerize into naringenin. This is Chalcone synthase 1 (CHS1) from Oryza sativa subsp. japonica (Rice).